The following is an 82-amino-acid chain: Delta-actitoxin-Aeq2c (82 aa).

Positions 1–19 are cleaved as a signal peptide; the sequence is MNRLMILVFAAVFLALASA. Positions 20 to 26 are excised as a propeptide; sequence DEDVDIA. 3 disulfide bridges follow: C32-C79, C34-C69, and C62-C80.

Belongs to the sea anemone sodium channel inhibitory toxin family. Type I subfamily.

The protein localises to the secreted. It localises to the nematocyst. Functionally, binds specifically to voltage-gated sodium channels (Nav), thereby delaying their inactivation during signal transduction. Causes death to crabs. The chain is Delta-actitoxin-Aeq2c from Actinia equina (Beadlet anemone).